The sequence spans 275 residues: Esterase AAEL000016 (275 aa).

The tract at residues 1–21 (MMANETAAKSTKSSPTPAVEP) is disordered. Polar residues predominate over residues 7 to 16 (AAKSTKSSPT). Catalysis depends on charge relay system residues serine 129, aspartate 187, and histidine 214. The disordered stretch occupies residues 253 to 275 (LVDDSGPAGNGVHDDDDDDDDSD). Acidic residues predominate over residues 266 to 275 (DDDDDDDDSD).

It belongs to the LovG family.

The chain is Esterase AAEL000016 from Aedes aegypti (Yellowfever mosquito).